The sequence spans 808 residues: Probable inorganic carbon transporter subunit DabA (808 aa).

4 residues coordinate Zn(2+): C334, D336, H494, and C509.

The protein belongs to the inorganic carbon transporter (TC 9.A.2) DabA family. In terms of assembly, forms a complex with DabB. The cofactor is Zn(2+).

The protein localises to the cell inner membrane. Part of an energy-coupled inorganic carbon pump. The sequence is that of Probable inorganic carbon transporter subunit DabA from Rhodopseudomonas palustris (strain BisB5).